The sequence spans 305 residues: MSSLVRPINLGKINNSQSTVKDYILLMKPRVMSLVIFTGFVGMWLAPYSVHPFIAGIAVVCIALGAGSAGAINMWYDRDIDSLMKRTQKRPIVRGVIESDEALSFGLITGFFAVFFMALCVNLLASFLLLFTIFYYICIYTIWLKRRSIQNIVIGGVSGALPPVIGYAAVSNTISLESIILFLIIFIWTPPHSWALALFCNDDYKNCKVPMMPAVKGTVYTKKQILIYSILLFIVSLMPFFIGMNNFIYLIISGILGVVFLYYAGSLFYDTPDNKQAKRFFAYSIFYLFFIFLLLYSTNTISTIS.

The next 9 helical transmembrane spans lie at 31 to 51, 52 to 72, 96 to 118, 123 to 145, 151 to 171, 179 to 199, 225 to 245, 247 to 267, and 281 to 301; these read VMSLVIFTGFVGMWLAPYSVH, PFIAGIAVVCIALGAGSAGAI, VIESDEALSFGLITGFFAVFFMA, LLASFLLLFTIFYYICIYTIWLK, NIVIGGVSGALPPVIGYAAVS, IILFLIIFIWTPPHSWALALF, ILIYSILLFIVSLMPFFIGMN, FIYLIISGILGVVFLYYAGSL, and FAYSIFYLFFIFLLLYSTNTI.

This sequence belongs to the UbiA prenyltransferase family. Protoheme IX farnesyltransferase subfamily.

It is found in the cell inner membrane. It catalyses the reaction heme b + (2E,6E)-farnesyl diphosphate + H2O = Fe(II)-heme o + diphosphate. Its pathway is porphyrin-containing compound metabolism; heme O biosynthesis; heme O from protoheme: step 1/1. Functionally, converts heme B (protoheme IX) to heme O by substitution of the vinyl group on carbon 2 of heme B porphyrin ring with a hydroxyethyl farnesyl side group. The chain is Protoheme IX farnesyltransferase from Rickettsia rickettsii (strain Iowa).